Consider the following 690-residue polypeptide: Elongation factor G (690 aa).

Residues 8–282 (DKVRNIGIMA…AIVNYLPSPL (275 aa)) form the tr-type G domain. Residues 17–24 (AHIDAGKT), 81–85 (DTPGH), and 135–138 (NKMD) contribute to the GTP site.

Belongs to the TRAFAC class translation factor GTPase superfamily. Classic translation factor GTPase family. EF-G/EF-2 subfamily.

Its subcellular location is the cytoplasm. In terms of biological role, catalyzes the GTP-dependent ribosomal translocation step during translation elongation. During this step, the ribosome changes from the pre-translocational (PRE) to the post-translocational (POST) state as the newly formed A-site-bound peptidyl-tRNA and P-site-bound deacylated tRNA move to the P and E sites, respectively. Catalyzes the coordinated movement of the two tRNA molecules, the mRNA and conformational changes in the ribosome. This chain is Elongation factor G, found in Caldanaerobacter subterraneus subsp. tengcongensis (strain DSM 15242 / JCM 11007 / NBRC 100824 / MB4) (Thermoanaerobacter tengcongensis).